The primary structure comprises 397 residues: UDP-GlcNAc:betaGal beta-1,3-N-acetylglucosaminyltransferase 8 (397 aa).

Residues 1 to 6 (MRCPKC) are Cytoplasmic-facing. Residues 7–23 (LLCLSALLTLLGLKVYI) form a helical; Signal-anchor for type II membrane protein membrane-spanning segment. Residues 24 to 397 (EWTSESRLSK…KQLQDPRLQC (374 aa)) lie on the Lumenal side of the membrane. Positions 33–58 (KAYPSPRGTPPSPTPANPEPTLPANL) are disordered. Residues 39-53 (RGTPPSPTPANPEPT) show a composition bias toward pro residues. Asn-57 is a glycosylation site (N-linked (GlcNAc...) asparagine).

This sequence belongs to the glycosyltransferase 31 family. Interacts with B3GNT2; this interaction greatly increases B3GNT2 catalytic activity, independently of B3GNT8 enzymatic activity. As to expression, highly expressed in small intestine, pancreas, spleen, bone marrow, lung, throat, and ileum, and weakly in fetal brain, cerebellum, heart, liver, tongue, breast, uteri, and testis. Not detected in colon. Differentially expressed in human tumor cell lines.

The protein localises to the golgi apparatus membrane. The protein operates within protein modification; protein glycosylation. In terms of biological role, beta-1,3-N-acetylglucosaminyltransferase that plays a role in the elongation of specific branch structures of multiantennary N-glycans. Has strong activity towards tetraantennary N-glycans and 2,6 triantennary glycans. This is UDP-GlcNAc:betaGal beta-1,3-N-acetylglucosaminyltransferase 8 from Homo sapiens (Human).